The chain runs to 981 residues: Isoleucine--tRNA ligase (981 aa).

Positions 50–60 (PTTNGMPHVGH) match the 'HIGH' region motif. Residues 604–608 (KMSKS) carry the 'KMSKS' region motif. Lysine 607 lines the ATP pocket.

This sequence belongs to the class-I aminoacyl-tRNA synthetase family. IleS type 2 subfamily. As to quaternary structure, monomer. The cofactor is Zn(2+).

Its subcellular location is the cytoplasm. It catalyses the reaction tRNA(Ile) + L-isoleucine + ATP = L-isoleucyl-tRNA(Ile) + AMP + diphosphate. In terms of biological role, catalyzes the attachment of isoleucine to tRNA(Ile). As IleRS can inadvertently accommodate and process structurally similar amino acids such as valine, to avoid such errors it has two additional distinct tRNA(Ile)-dependent editing activities. One activity is designated as 'pretransfer' editing and involves the hydrolysis of activated Val-AMP. The other activity is designated 'posttransfer' editing and involves deacylation of mischarged Val-tRNA(Ile). In Pyrobaculum aerophilum (strain ATCC 51768 / DSM 7523 / JCM 9630 / CIP 104966 / NBRC 100827 / IM2), this protein is Isoleucine--tRNA ligase.